We begin with the raw amino-acid sequence, 353 residues long: Tectonin-2 (353 aa).

The Ricin B-type lectin domain occupies 44–93 (WIFDNDGYIRLAANHNLVLDVNGGAAKEGNTVLSYPDKKDHAKNQLWVNK). Tandem repeats lie at residues 138–173 (SAWE…HWDG), 174–210 (SKWH…DRGT), 211–247 (NKWS…NADS), 248–282 (NSWT…HYNG), 283–318 (NSWD…LKHG), and 319–353 (KDWE…KALL). A 6 X approximate tandem repeats region spans residues 138–353 (SAWERHEGEL…SAHNIYKALL (216 aa)).

This sequence belongs to the tectonin family.

It is found in the cell surface. The protein resides in the cytoplasmic vesicle membrane. Functionally, probably involved in bacterial recognition. May be a lectin that function as part of a transmembrane signaling complex during phagocytosis. The polypeptide is Tectonin-2 (TECB) (Physarum polycephalum (Slime mold)).